The sequence spans 661 residues: Transketolase (661 aa).

H28 contributes to the substrate binding site. Thiamine diphosphate is bound by residues H68 and 116–118; that span reads GPL. E157 is a binding site for Mg(2+). Thiamine diphosphate-binding residues include G158 and N187. N187 and I189 together coordinate Mg(2+). Substrate contacts are provided by H261 and R358. H261 is a binding site for thiamine diphosphate. The active-site Proton donor is the E412. F438 contacts thiamine diphosphate. Substrate is bound by residues H462, D470, and R521.

It belongs to the transketolase family. As to quaternary structure, homodimer. The cofactor is Mg(2+). Requires Ca(2+) as cofactor. Mn(2+) is required as a cofactor. Co(2+) serves as cofactor. It depends on thiamine diphosphate as a cofactor.

It carries out the reaction D-sedoheptulose 7-phosphate + D-glyceraldehyde 3-phosphate = aldehydo-D-ribose 5-phosphate + D-xylulose 5-phosphate. Catalyzes the transfer of a two-carbon ketol group from a ketose donor to an aldose acceptor, via a covalent intermediate with the cofactor thiamine pyrophosphate. The polypeptide is Transketolase (tkt) (Treponema pallidum (strain Nichols)).